The chain runs to 366 residues: Apolipoprotein A-V (366 aa).

The N-terminal stretch at 1–23 is a signal peptide; the sequence is MASMAAVLTWALALLSAFSATQA. 2 coiled-coil regions span residues 54–157 and 236–262; these read ATLK…VGED and TLKA…RAFA. A Phosphothreonine; by FAM20C modification is found at threonine 55. Phosphoserine is present on serine 59.

It belongs to the apolipoprotein A1/A4/E family. In terms of assembly, interacts with GPIHBP1. Interacts with SORL1; this interaction leads to APOA5 internalization and sorting either to lysosomes and degradation, or to the trans-Golgi network. In terms of processing, phosphorylated by FAM20C in the extracellular medium. As to expression, liver and plasma.

Its subcellular location is the secreted. It localises to the early endosome. It is found in the late endosome. The protein resides in the golgi apparatus. The protein localises to the trans-Golgi network. Functionally, minor apolipoprotein mainly associated with HDL and to a lesser extent with VLDL. May also be associated with chylomicrons. Important determinant of plasma triglyceride (TG) levels by both being a potent stimulator of apo-CII lipoprotein lipase (LPL) TG hydrolysis and an inhibitor of the hepatic VLDL-TG production rate (without affecting the VLDL-apoB production rate). Activates poorly lecithin:cholesterol acyltransferase (LCAT) and does not enhance efflux of cholesterol from macrophages. Binds heparin. The sequence is that of Apolipoprotein A-V (APOA5) from Homo sapiens (Human).